A 338-amino-acid polypeptide reads, in one-letter code: Ketol-acid reductoisomerase (NADP(+)) (338 aa).

The 181-residue stretch at 1–181 folds into the KARI N-terminal Rossmann domain; sequence MKVFYDKDAD…GGGRAGIIET (181 aa). NADP(+)-binding positions include 24–27, arginine 47, and serine 52; that span reads YGSQ. Histidine 107 is an active-site residue. Glycine 133 provides a ligand contact to NADP(+). The KARI C-terminal knotted domain occupies 182 to 327; it reads NFREETETDL…AKLRAMMPWI (146 aa). Mg(2+) contacts are provided by aspartate 190, glutamate 194, glutamate 226, and glutamate 230. A substrate-binding site is contributed by serine 251.

The protein belongs to the ketol-acid reductoisomerase family. Mg(2+) serves as cofactor.

It carries out the reaction (2R)-2,3-dihydroxy-3-methylbutanoate + NADP(+) = (2S)-2-acetolactate + NADPH + H(+). The catalysed reaction is (2R,3R)-2,3-dihydroxy-3-methylpentanoate + NADP(+) = (S)-2-ethyl-2-hydroxy-3-oxobutanoate + NADPH + H(+). Its pathway is amino-acid biosynthesis; L-isoleucine biosynthesis; L-isoleucine from 2-oxobutanoate: step 2/4. The protein operates within amino-acid biosynthesis; L-valine biosynthesis; L-valine from pyruvate: step 2/4. In terms of biological role, involved in the biosynthesis of branched-chain amino acids (BCAA). Catalyzes an alkyl-migration followed by a ketol-acid reduction of (S)-2-acetolactate (S2AL) to yield (R)-2,3-dihydroxy-isovalerate. In the isomerase reaction, S2AL is rearranged via a Mg-dependent methyl migration to produce 3-hydroxy-3-methyl-2-ketobutyrate (HMKB). In the reductase reaction, this 2-ketoacid undergoes a metal-dependent reduction by NADPH to yield (R)-2,3-dihydroxy-isovalerate. This Polynucleobacter asymbioticus (strain DSM 18221 / CIP 109841 / QLW-P1DMWA-1) (Polynucleobacter necessarius subsp. asymbioticus) protein is Ketol-acid reductoisomerase (NADP(+)).